Reading from the N-terminus, the 467-residue chain is tRNA-2-methylthio-N(6)-dimethylallyladenosine synthase (467 aa).

The tract at residues 1–20 (MSDDTTQIEPAMAQETSPRA) is disordered. Residues 23-143 (RKVFVKTYGC…LPNALARVRG (121 aa)) enclose the MTTase N-terminal domain. [4Fe-4S] cluster-binding residues include Cys-32, Cys-68, Cys-106, Cys-184, Cys-188, and Cys-191. Residues 170–402 (RKRGVSAFLT…QALLSAQQYA (233 aa)) form the Radical SAM core domain. Residues 405–467 (DSMIGRKMDV…TNSLIAQKLA (63 aa)) enclose the TRAM domain.

It belongs to the methylthiotransferase family. MiaB subfamily. Monomer. [4Fe-4S] cluster is required as a cofactor.

It localises to the cytoplasm. The enzyme catalyses N(6)-dimethylallyladenosine(37) in tRNA + (sulfur carrier)-SH + AH2 + 2 S-adenosyl-L-methionine = 2-methylsulfanyl-N(6)-dimethylallyladenosine(37) in tRNA + (sulfur carrier)-H + 5'-deoxyadenosine + L-methionine + A + S-adenosyl-L-homocysteine + 2 H(+). Functionally, catalyzes the methylthiolation of N6-(dimethylallyl)adenosine (i(6)A), leading to the formation of 2-methylthio-N6-(dimethylallyl)adenosine (ms(2)i(6)A) at position 37 in tRNAs that read codons beginning with uridine. This chain is tRNA-2-methylthio-N(6)-dimethylallyladenosine synthase, found in Brucella abortus (strain S19).